Consider the following 397-residue polypeptide: Putative nickel insertion protein (397 aa).

The protein belongs to the LarC family.

In Synechococcus sp. (strain JA-2-3B'a(2-13)) (Cyanobacteria bacterium Yellowstone B-Prime), this protein is Putative nickel insertion protein.